Consider the following 114-residue polypeptide: Large ribosomal subunit protein bL19 (114 aa).

This sequence belongs to the bacterial ribosomal protein bL19 family.

In terms of biological role, this protein is located at the 30S-50S ribosomal subunit interface and may play a role in the structure and function of the aminoacyl-tRNA binding site. In Heliobacterium modesticaldum (strain ATCC 51547 / Ice1), this protein is Large ribosomal subunit protein bL19.